The sequence spans 248 residues: CKLF-like MARVEL transmembrane domain-containing protein 2 (248 aa).

The disordered stretch occupies residues 1–63 (MAPKAAKGAK…KAVQPKHEVG (63 aa)). Residues 12-22 (EPAPAPPPPGA) show a composition bias toward pro residues. The segment covering 23 to 63 (KPEEDKKDGKEPSDKPQKAVQDHKEPSDKPQKAVQPKHEVG) has biased composition (basic and acidic residues). The MARVEL domain occupies 82-204 (FWLLGHAEIK…DVCLQRNHFR (123 aa)). 3 helical membrane passes run 116–136 (LIITMEISFFSFFILLYSFAI), 147–167 (ISDLFNDLIACAFLVGAVVFA), and 178–198 (YLLAVILIGAAGVFAFIDVCL). Residues 208-248 (AKKHMLVPPPGKEKGPQQGKGPEPAKPPEPGKPPGPAKGKK) form a disordered region. The segment covering 231–248 (PAKPPEPGKPPGPAKGKK) has biased composition (pro residues).

This sequence belongs to the chemokine-like factor family. In terms of tissue distribution, highly expressed in testis.

The protein resides in the membrane. The protein is CKLF-like MARVEL transmembrane domain-containing protein 2 (CMTM2) of Homo sapiens (Human).